The primary structure comprises 334 residues: Holliday junction branch migration complex subunit RuvB (334 aa).

The large ATPase domain (RuvB-L) stretch occupies residues 1–181; sequence MTRILDNDLM…FGITGHMEYY (181 aa). ATP is bound by residues leucine 20, arginine 21, glycine 62, lysine 65, threonine 66, threonine 67, 128 to 130, arginine 171, tyrosine 181, and arginine 218; that span reads EDF. Threonine 66 contributes to the Mg(2+) binding site. The interval 182-252 is small ATPAse domain (RuvB-S); the sequence is QVDDLTEIVE…MTDKALEMLD (71 aa). Residues 255–334 form a head domain (RuvB-H) region; sequence HEGLDYVDQK…LKYPLDTKTE (80 aa). 4 residues coordinate DNA: arginine 291, arginine 310, arginine 312, and arginine 315.

The protein belongs to the RuvB family. In terms of assembly, homohexamer. Forms an RuvA(8)-RuvB(12)-Holliday junction (HJ) complex. HJ DNA is sandwiched between 2 RuvA tetramers; dsDNA enters through RuvA and exits via RuvB. An RuvB hexamer assembles on each DNA strand where it exits the tetramer. Each RuvB hexamer is contacted by two RuvA subunits (via domain III) on 2 adjacent RuvB subunits; this complex drives branch migration. In the full resolvosome a probable DNA-RuvA(4)-RuvB(12)-RuvC(2) complex forms which resolves the HJ.

Its subcellular location is the cytoplasm. It catalyses the reaction ATP + H2O = ADP + phosphate + H(+). Its function is as follows. The RuvA-RuvB-RuvC complex processes Holliday junction (HJ) DNA during genetic recombination and DNA repair, while the RuvA-RuvB complex plays an important role in the rescue of blocked DNA replication forks via replication fork reversal (RFR). RuvA specifically binds to HJ cruciform DNA, conferring on it an open structure. The RuvB hexamer acts as an ATP-dependent pump, pulling dsDNA into and through the RuvAB complex. RuvB forms 2 homohexamers on either side of HJ DNA bound by 1 or 2 RuvA tetramers; 4 subunits per hexamer contact DNA at a time. Coordinated motions by a converter formed by DNA-disengaged RuvB subunits stimulates ATP hydrolysis and nucleotide exchange. Immobilization of the converter enables RuvB to convert the ATP-contained energy into a lever motion, pulling 2 nucleotides of DNA out of the RuvA tetramer per ATP hydrolyzed, thus driving DNA branch migration. The RuvB motors rotate together with the DNA substrate, which together with the progressing nucleotide cycle form the mechanistic basis for DNA recombination by continuous HJ branch migration. Branch migration allows RuvC to scan DNA until it finds its consensus sequence, where it cleaves and resolves cruciform DNA. This Streptococcus uberis (strain ATCC BAA-854 / 0140J) protein is Holliday junction branch migration complex subunit RuvB.